The following is a 1489-amino-acid chain: MKLAFNKLLVASVVFTVLSFGLLLASLFTTTATTPSEWTILLPEFRFPVNKKQTTEQFLVEKIVHEHEEGEDVRSALYLTHHGYFMNAIANMKVTYRQKSYTVNDVCFKPHSAIFENVPAPENIDKLPAYFQRLLLEMQRLSPCLIVTPLNCFYDSYHIHSEISNWNASTDYLNRRLRNSYLEAIEEKDSRPYVKSTYGPELIKEWARHMFAIPSKPLSNFSKSDLYSRVKTWLSSIAARKKICADPMRSCDETLDAENYFNVCTVMQQINDYDERRKQRLKFQLEYGDEEFTTRLDCVEDREKFIEWMQERNLRDMLKLFASSVEIPDHKEIPNQVCDGIYHDLDTSSGLELFRGARSFSNNTSAYDTINVELGFMTPENLLTTMRHSDFVNGFESIWTIERARELLNEFRLALKVEVTKFSESRSSRRVKVTTRIVNQIEEEGSDEEMEYHMIYFILGACALMVALFAAFAFSEAFLTSLSMFLLRGFITGLLFIFLCKSGGLILIDSNFLCYITMHLAFNLVMTARVTFICYRIGGCVQSEKDFVKSNFSSLGSVPVDSLKEDSCKRHVQYVLAKYTKFQVAQDAYSEEPFEKLPKYWFLIAIVLVPVIGVYWFFIDSDVQKICIVLLPAFLIAAFEEMRVKNQLLRERRIKKAIQRLQKEENTRIMSRGEIDNLLSGNAELSGEKSHYESKQGVLHHGSAGGLFELSRSTYDVSLIMAYPNQMIRNLRLCALGAYFRLFKMKYCAVVVSSVAALLILLSIGLLFIPVQRSSVPKELQQDELSIDFAIPNVSSSSWESINEYLEEFNSEIDSITNLQTITNGRRVLINSTSKINNFLKWVDDEPISWYLTAPLTRPYRKTHLPNPFRFQFRYGFDSIQKSTIIDVVERIDTLLTKYTETLSFPKAIGFLYEHYHQKAVVWNSFAYHEIFAAAVLAGFFSIIVVFFSIGPVVLPTLAFAFFVVGNRLEIAAIVSLFSLEYHQCYTNVAVFVGFLAAWTPFCDLARFRGRLLYKDQTRRTPELATQRRIRVPHVAAVDTVQIFAIFLTATILLIVITAIIPQFRAFFIPTVILLITLLLAVFNSLAVSLAAYQMFEHEVRHCYHDQLQSLTTTGKVCDMTRKKLLPREEDLSIPMEEFSIRPTENTKHYAPRPIDNSDPPEQAADEEVVNQDPSMEAARRQYVEFTHRTTGMPIELINQFVDNFPVFNVPANFLPNYFALGGAPLDANNGVLLRQPGIAPPPRPNREEDEEERFGLGGGEDDDSYPSSGDDIGDPAKEQQEVTDDVATRYKEEEVRKKVQPAVPNYDDPNVPGPSNPVPRQVEQVSREAPEDSPNREPRILVYQRPPRLHEIPQISHGRNPLHDPPSMEEYVQKYDDPNQPPSRRADQYPPSFTPAMVGYCEDVYWKYNERNLPDNVPMPPRPRDWDQRRLVELPPPEDFDEVPPPGRSAIPIPPGAIRLRERRREQHLREQEARRNRPESPDDTPGL.

A signal peptide spans 1–33; that stretch reads MKLAFNKLLVASVVFTVLSFGLLLASLFTTTAT. 11 consecutive transmembrane segments (helical) span residues 454–474, 489–509, 513–533, 600–620, 622–642, 749–769, 931–951, 958–978, 986–1006, 1041–1061, and 1066–1086; these read MIYFILGACALMVALFAAFAF, GFITGLLFIFLCKSGGLILID, LCYITMHLAFNLVMTARVTFI, YWFLIAIVLVPVIGVYWFFID, DVQKICIVLLPAFLIAAFEEM, AVVVSSVAALLILLSIGLLFI, IFAAAVLAGFFSIIVVFFSIG, LAFAFFVVGNRLEIAAIVSLF, YTNVAVFVGFLAAWTPFCDLA, VQIFAIFLTATILLIVITAII, and AFFIPTVILLITLLLAVFNSL. Positions 1138–1288 are interaction with fem-3; that stretch reads EFSIRPTENT…EQQEVTDDVA (151 aa). Disordered stretches follow at residues 1143 to 1176, 1233 to 1393, and 1412 to 1489; these read PTENTKHYAPRPIDNSDPPEQAADEEVVNQDPSM, LLRQ…YPPS, and RNLP…TPGL. Composition is skewed to basic and acidic residues over residues 1275–1298, 1326–1340, and 1423–1433; these read DPAKEQQEVTDDVATRYKEEEVRK, VSREAPEDSPNREPR, and RPRDWDQRRLV. The tract at residues 1402–1423 is MX regulatory domain; required for tra-1 binding; the sequence is CEDVYWKYNERNLPDNVPMPPR. The segment covering 1444–1456 has biased composition (pro residues); the sequence is VPPPGRSAIPIPP. The segment covering 1460-1482 has biased composition (basic and acidic residues); that stretch reads RLRERRREQHLREQEARRNRPES.

Interacts with tra-1 and fem-3.

Its subcellular location is the membrane. Functionally, plays a major role in controlling sexual cell fates. Promotes female development in XX animals where it sequesters one or more of the FEM proteins to the membrane thereby freeing the tra-1 protein (a putative transcription factor) to enter the nucleus and promote female development. In XO animals it acts as a receptor for her-1 which prevents it from binding to FEM proteins thereby repressing the activity of tra-1. Negatively regulates male development when bound to fem-3 and is required together with tra-1 for promoting spermatogenesis. Also required for feminizing tra-3 activity. The chain is Sex-determining transformer protein 2 from Caenorhabditis briggsae.